Here is a 68-residue protein sequence, read N- to C-terminus: Peptide TsPep3 (68 aa).

The first 26 residues, 1–26 (MKLSCGFLLIFLVLSAMIATFSEVEA), serve as a signal peptide directing secretion. Disulfide bonds link cysteine 30-cysteine 38, cysteine 33-cysteine 54, cysteine 37-cysteine 47, and cysteine 42-cysteine 52. Residues 56–68 (GRSDLNEEFENYQ) constitute a propeptide that is removed on maturation.

Expressed by the venom gland.

The protein localises to the secreted. In terms of biological role, probable weak potassium channel blocker. The protein is Peptide TsPep3 of Tityus serrulatus (Brazilian scorpion).